A 137-amino-acid chain; its full sequence is Large ribosomal subunit protein bL17 (137 aa).

Belongs to the bacterial ribosomal protein bL17 family. As to quaternary structure, part of the 50S ribosomal subunit. Contacts protein L32.

This Rickettsia typhi (strain ATCC VR-144 / Wilmington) protein is Large ribosomal subunit protein bL17.